A 391-amino-acid chain; its full sequence is Multidrug resistance protein MdtL (391 aa).

12 consecutive transmembrane segments (helical) span residues F4–V24, I42–A62, P69–E89, L93–F113, L131–M151, S158–L178, F203–V222, A245–F265, T269–P289, V293–M313, L331–I351, and M356–A376.

The protein belongs to the major facilitator superfamily. DHA1 family. MdtL (TC 2.A.1.2.22) subfamily.

It localises to the cell inner membrane. Confers resistance to chloramphenicol. This chain is Multidrug resistance protein MdtL, found in Escherichia coli O127:H6 (strain E2348/69 / EPEC).